We begin with the raw amino-acid sequence, 154 residues long: Myoglobin (154 aa).

The Globin domain occupies 2 to 148 (GLSDAEWQLV…FRNDIAAQYK (147 aa)). Residue S4 is modified to Phosphoserine. H65 provides a ligand contact to nitrite. H65 serves as a coordination point for O2. Phosphothreonine is present on T68. H94 lines the heme b pocket.

This sequence belongs to the globin family. Monomeric.

It is found in the cytoplasm. The protein localises to the sarcoplasm. The catalysed reaction is Fe(III)-heme b-[protein] + nitric oxide + H2O = Fe(II)-heme b-[protein] + nitrite + 2 H(+). The enzyme catalyses H2O2 + AH2 = A + 2 H2O. Monomeric heme protein which primary function is to store oxygen and facilitate its diffusion within muscle tissues. Reversibly binds oxygen through a pentacoordinated heme iron and enables its timely and efficient release as needed during periods of heightened demand. Depending on the oxidative conditions of tissues and cells, and in addition to its ability to bind oxygen, it also has a nitrite reductase activity whereby it regulates the production of bioactive nitric oxide. Under stress conditions, like hypoxia and anoxia, it also protects cells against reactive oxygen species thanks to its pseudoperoxidase activity. This chain is Myoglobin (MB), found in Oryctolagus cuniculus (Rabbit).